The following is a 298-amino-acid chain: Tyrosine recombinase XerC (298 aa).

The 87-residue stretch at Thr2 to Val88 folds into the Core-binding (CB) domain. The 180-residue stretch at His109–Asp288 folds into the Tyr recombinase domain. Catalysis depends on residues Arg148, Lys172, His240, Arg243, and His266. The active-site O-(3'-phospho-DNA)-tyrosine intermediate is Tyr275.

This sequence belongs to the 'phage' integrase family. XerC subfamily. In terms of assembly, forms a cyclic heterotetrameric complex composed of two molecules of XerC and two molecules of XerD, in which XerC interacts with XerD via its C-terminal region, XerD interacts with XerC via its C-terminal region and so on.

The protein resides in the cytoplasm. FtsK may regulate the catalytic switch between XerC and XerD in the heterotetrameric complex during the two steps of the recombination process. Functionally, site-specific tyrosine recombinase, which acts by catalyzing the cutting and rejoining of the recombining DNA molecules. Binds cooperatively to specific DNA consensus sequences that are separated from XerD binding sites by a short central region, forming the heterotetrameric XerC-XerD complex that recombines DNA substrates. The complex is essential to convert dimers of the bacterial chromosome into monomers to permit their segregation at cell division. It also contributes to the segregational stability of plasmids. In the complex XerC specifically exchanges the top DNA strands. The chain is Tyrosine recombinase XerC from Shigella dysenteriae serotype 1 (strain Sd197).